The following is a 212-amino-acid chain: Cyclin-dependent kinase inhibitor 3 (212 aa).

Residues 1–12 (MKPPSSIQTSEF) are compositionally biased toward polar residues. The segment at 1–23 (MKPPSSIQTSEFDSSDEEPIEDE) is disordered. An interaction with CDK2 region spans residues 1–34 (MKPPSSIQTSEFDSSDEEPIEDEQTPIQISWLPL). A compositionally biased stretch (acidic residues) spans 13 to 23 (DSSDEEPIEDE). One can recognise a Tyrosine-protein phosphatase domain in the interval 32–201 (LPLSRVNYSQ…FRDKLAAHLS (170 aa)). The active-site Phosphocysteine intermediate is Cys-140.

It belongs to the protein-tyrosine phosphatase family. Interacts with cyclin-dependent kinases such as CDK1, CDK2 and CDK3. Does not interact with CDK4. Interacts (via C-terminus) with phosphorylated CDK2 (via C-terminal helix). Interacts with MS4A3 (via C-terminus); the interaction enhances CDKN3 enzymatic activity.

It is found in the cytoplasm. It localises to the perinuclear region. The catalysed reaction is O-phospho-L-tyrosyl-[protein] + H2O = L-tyrosyl-[protein] + phosphate. The enzyme catalyses O-phospho-L-seryl-[protein] + H2O = L-seryl-[protein] + phosphate. It carries out the reaction O-phospho-L-threonyl-[protein] + H2O = L-threonyl-[protein] + phosphate. Functionally, may play a role in cell cycle regulation. Dual specificity phosphatase active toward substrates containing either phosphotyrosine or phosphoserine residues. Dephosphorylates CDK2 at 'Thr-160' in a cyclin-dependent manner. The protein is Cyclin-dependent kinase inhibitor 3 of Sus scrofa (Pig).